Reading from the N-terminus, the 74-residue chain is Small ribosomal subunit protein bS21 (74 aa).

The protein belongs to the bacterial ribosomal protein bS21 family.

This chain is Small ribosomal subunit protein bS21, found in Coxiella burnetii (strain Dugway 5J108-111).